Consider the following 337-residue polypeptide: Phenylalanine--tRNA ligase alpha subunit (337 aa).

Glu-252 contacts Mg(2+).

This sequence belongs to the class-II aminoacyl-tRNA synthetase family. Phe-tRNA synthetase alpha subunit type 1 subfamily. Tetramer of two alpha and two beta subunits. Mg(2+) is required as a cofactor.

The protein resides in the cytoplasm. The catalysed reaction is tRNA(Phe) + L-phenylalanine + ATP = L-phenylalanyl-tRNA(Phe) + AMP + diphosphate + H(+). This Cellvibrio japonicus (strain Ueda107) (Pseudomonas fluorescens subsp. cellulosa) protein is Phenylalanine--tRNA ligase alpha subunit.